The chain runs to 135 residues: Small ribosomal subunit protein uS9 (135 aa).

This sequence belongs to the universal ribosomal protein uS9 family.

The polypeptide is Small ribosomal subunit protein uS9 (Petrotoga mobilis (strain DSM 10674 / SJ95)).